A 470-amino-acid chain; its full sequence is Serine/threonine-protein kinase-like protein At1g28390 (470 aa).

The Protein kinase domain occupies 52–333 (FSANNFLGKG…LEVVECLKTV (282 aa)). Residues 58–66 (LGKGSHGRV) and Lys-81 contribute to the ATP site. The Proton acceptor role is filled by Asp-186. Residues Thr-221 and Thr-226 each carry the phosphothreonine modification. Tyr-234 bears the Phosphotyrosine mark.

It belongs to the protein kinase superfamily. Ser/Thr protein kinase family.

The catalysed reaction is L-seryl-[protein] + ATP = O-phospho-L-seryl-[protein] + ADP + H(+). It catalyses the reaction L-threonyl-[protein] + ATP = O-phospho-L-threonyl-[protein] + ADP + H(+). This Arabidopsis thaliana (Mouse-ear cress) protein is Serine/threonine-protein kinase-like protein At1g28390.